The chain runs to 485 residues: Protein nucleotidyltransferase YdiU (485 aa).

ATP is bound by residues Gly90, Gly92, Arg93, Lys113, Asp125, Gly126, Arg176, and Arg183. The Proton acceptor role is filled by Asp252. Residues Asn253 and Asp262 each coordinate Mg(2+). Asp262 contacts ATP.

This sequence belongs to the SELO family. It depends on Mg(2+) as a cofactor. Requires Mn(2+) as cofactor.

The catalysed reaction is L-seryl-[protein] + ATP = 3-O-(5'-adenylyl)-L-seryl-[protein] + diphosphate. It carries out the reaction L-threonyl-[protein] + ATP = 3-O-(5'-adenylyl)-L-threonyl-[protein] + diphosphate. The enzyme catalyses L-tyrosyl-[protein] + ATP = O-(5'-adenylyl)-L-tyrosyl-[protein] + diphosphate. It catalyses the reaction L-histidyl-[protein] + UTP = N(tele)-(5'-uridylyl)-L-histidyl-[protein] + diphosphate. The catalysed reaction is L-seryl-[protein] + UTP = O-(5'-uridylyl)-L-seryl-[protein] + diphosphate. It carries out the reaction L-tyrosyl-[protein] + UTP = O-(5'-uridylyl)-L-tyrosyl-[protein] + diphosphate. Nucleotidyltransferase involved in the post-translational modification of proteins. It can catalyze the addition of adenosine monophosphate (AMP) or uridine monophosphate (UMP) to a protein, resulting in modifications known as AMPylation and UMPylation. This chain is Protein nucleotidyltransferase YdiU, found in Aliivibrio fischeri (strain MJ11) (Vibrio fischeri).